The sequence spans 388 residues: Mannitol-1-phosphate 5-dehydrogenase (388 aa).

5–16 contacts NAD(+); that stretch reads AIQFGGGNIGRG. The active site involves lysine 213.

The protein belongs to the mannitol dehydrogenase family. As to quaternary structure, monomer.

The enzyme catalyses D-mannitol 1-phosphate + NAD(+) = beta-D-fructose 6-phosphate + NADH + H(+). Functionally, catalyzes the NAD(H)-dependent interconversion of D-fructose 6-phosphate and D-mannitol 1-phosphate in the mannitol metabolic pathway. This Aspergillus terreus (strain NIH 2624 / FGSC A1156) protein is Mannitol-1-phosphate 5-dehydrogenase (mpdA).